The primary structure comprises 521 residues: MANYLPSSPAWLAFSQAAKSASRGGERLRIIEAAGLRVDLTAQPQSDSLDNAAQDLLAQQNFDAARAQLYDGGEANWTERRPAWHTALRADNPPPAVAQDILAERERVRRFVRELDQSLAYDCVLHLGIGGSDWGPRMVTRALRHGGLRRNIQFASNVDSHAVADAIGQLDPRRTLVIVASKSFTTTEPLANAEVAMNWLRDAGVADPIKHVVAVTANVDAALDFGISPDRVFRFWDWVGGRYSLWSAIGLPIALALGNEALDQLLAGAAAMDQHFLQAPLRKNAPLQMALAGLANRSVLGYATLAITPYDSRLMHLVPWAQQLEMESLGKVASRDGTPVGVPTGPVVWGMPGTDCQHTFFQWLHQDTTGAPVDFIVCERPDHAYARHHNMLIANCLAQRSALLRGKSYEDILQEIREHEPDLQRAEVLARHRVHPGGRPSNLIVLPRLDAYSLGALLALYEHKVFAQGVLWGINPFDQWGVEFGKLLAKRIIRELDAPSADTSGDQDPSTRYWIDSLSRR.

The active-site Proton donor is Glu327. Catalysis depends on residues His358 and Lys486.

It belongs to the GPI family.

The protein localises to the cytoplasm. It catalyses the reaction alpha-D-glucose 6-phosphate = beta-D-fructose 6-phosphate. Its pathway is carbohydrate biosynthesis; gluconeogenesis. The protein operates within carbohydrate degradation; glycolysis; D-glyceraldehyde 3-phosphate and glycerone phosphate from D-glucose: step 2/4. In terms of biological role, catalyzes the reversible isomerization of glucose-6-phosphate to fructose-6-phosphate. This is Glucose-6-phosphate isomerase from Bordetella petrii (strain ATCC BAA-461 / DSM 12804 / CCUG 43448).